The following is a 227-amino-acid chain: Eukaryotic translation initiation factor NCBP (227 aa).

The segment covering 1–22 has biased composition (basic and acidic residues); the sequence is MEPAAEKREAEQEELQQQHDEP. A disordered region spans residues 1–43; that stretch reads MEPAAEKREAEQEELQQQHDEPAVPSADDDEAEAEENERRNRE. The span at 27–36 shows a compositional bias: acidic residues; sequence ADDDEAEAEE.

The protein belongs to the eukaryotic initiation factor 4E family. In terms of assembly, EIF4F is a multi-subunit complex, the composition of which varies with external and internal environmental conditions. It is composed of at least EIF4A, EIF4E and EIF4G. EIF4E is also known to interact with other partners. In higher plants two isoforms of EIF4F have been identified, named isoform EIF4F and isoform EIF(iso)4F. Isoform EIF4F has subunits p220 and p26, whereas isoform EIF(iso)4F has subunits p82 and p28.

Functionally, recognizes and binds the 7-methylguanosine-containing mRNA cap during an early step in the initiation of protein synthesis and facilitates ribosome binding by inducing the unwinding of the mRNAs secondary structures. The chain is Eukaryotic translation initiation factor NCBP (NCBP) from Oryza sativa subsp. japonica (Rice).